The following is a 112-amino-acid chain: MVPHEFVTTAYDLPGYRVTRNFGIVRGIVVRSRSILGTLGAGLQTMVGGNISIFSNLCEQTRSDAFELMIQHAGQLGANAVIGMQYDATEIMQGVTEVLAYGTAVEVVPASK.

This sequence belongs to the UPF0145 family.

This is UPF0145 protein Acid_4599 from Solibacter usitatus (strain Ellin6076).